A 690-amino-acid polypeptide reads, in one-letter code: Glycine--tRNA ligase beta subunit (690 aa).

It belongs to the class-II aminoacyl-tRNA synthetase family. As to quaternary structure, tetramer of two alpha and two beta subunits.

It is found in the cytoplasm. The catalysed reaction is tRNA(Gly) + glycine + ATP = glycyl-tRNA(Gly) + AMP + diphosphate. In Desulfitobacterium hafniense (strain Y51), this protein is Glycine--tRNA ligase beta subunit.